A 204-amino-acid chain; its full sequence is MDVAFESPYWKKFQYICGVDEVGRGPLAGPVVAAAVIFDRYFEPSGILEQIDDSKALRHETRVLLSSEIKKQALSFSIAEISPEVIDEVNILQATFLAMNQAIEQLSPIPEFLLIDGNRFKTTLPIPFETVVKGDSKVFSIAAASIIAKVHRDNFMINLAERYPEYGFAQHFGYPTKAHIEAIKMFGRSKVHRKSFKLSCLGEK.

The region spanning 14–204 (QYICGVDEVG…SFKLSCLGEK (191 aa)) is the RNase H type-2 domain. A divalent metal cation contacts are provided by Asp-20, Glu-21, and Asp-116.

Belongs to the RNase HII family. The cofactor is Mn(2+). Mg(2+) is required as a cofactor.

The protein localises to the cytoplasm. It catalyses the reaction Endonucleolytic cleavage to 5'-phosphomonoester.. Functionally, endonuclease that specifically degrades the RNA of RNA-DNA hybrids. In Chloroherpeton thalassium (strain ATCC 35110 / GB-78), this protein is Ribonuclease HII.